An 81-amino-acid polypeptide reads, in one-letter code: Small ribosomal subunit protein bS16c (81 aa).

Belongs to the bacterial ribosomal protein bS16 family.

The protein localises to the plastid. It localises to the chloroplast. This Emiliania huxleyi (Coccolithophore) protein is Small ribosomal subunit protein bS16c.